The chain runs to 267 residues: Putative carbamate hydrolase RutD (267 aa).

The 102-residue stretch at Pro-14 to Leu-115 folds into the AB hydrolase-1 domain.

The protein belongs to the AB hydrolase superfamily. Hydrolase RutD family.

It carries out the reaction carbamate + 2 H(+) = NH4(+) + CO2. Functionally, involved in pyrimidine catabolism. May facilitate the hydrolysis of carbamate, a reaction that can also occur spontaneously. The chain is Putative carbamate hydrolase RutD from Cronobacter turicensis (strain DSM 18703 / CCUG 55852 / LMG 23827 / z3032).